Reading from the N-terminus, the 271-residue chain is Secretagogin (271 aa).

EF-hand domains are found at residues 8–43 (LDAAEFLEIWQRFDADDNGYIEGKELDEFFCHLLKK), 53–88 (KVQGVKDRFMSAYDITADGRLQIQELANMILPEDEN), 100–135 (DNSVEFMRIWRKFDEDSSGFISAVELRNFLQDLFLQ), 144–179 (KLDEYTDTMMKLFNRNKDGRLDLNDLAKILALQENF), 192–227 (ERKSDFETIFAHYDVSKTGALEGPEVDGFVKDMMEL), and 235–271 (VDLDKFRQILLNHCDVNKDGKIQKSELALCLGLKANP). Ca(2+) is bound by residues D21, D23, N25, Y27, and E32. Residues D113, D115, S117, E124, N159, D161, R163, D168, D205, S207, T209, E216, D249, N251, D253, K255, and E260 each coordinate Ca(2+).

The protein resides in the cytoplasm. The polypeptide is Secretagogin (scgn) (Xenopus laevis (African clawed frog)).